A 468-amino-acid polypeptide reads, in one-letter code: Arginine biosynthesis bifunctional protein ArgJ, mitochondrial (468 aa).

The transit peptide at 1 to 23 (MVGFSRCALSQLRQPKAQLVRSF) directs the protein to the mitochondrion. Residues T198, K227, T238, E324, N463, and T468 each contribute to the substrate site. T238 functions as the Nucleophile in the catalytic mechanism.

This sequence belongs to the ArgJ family. As to quaternary structure, heterodimer of an alpha and a beta chain. In terms of processing, the alpha and beta chains are autoproteolytically processed from a single precursor protein within the mitochondrion.

It is found in the mitochondrion matrix. The catalysed reaction is N(2)-acetyl-L-ornithine + L-glutamate = N-acetyl-L-glutamate + L-ornithine. It carries out the reaction L-glutamate + acetyl-CoA = N-acetyl-L-glutamate + CoA + H(+). The protein operates within amino-acid biosynthesis; L-arginine biosynthesis; L-ornithine and N-acetyl-L-glutamate from L-glutamate and N(2)-acetyl-L-ornithine (cyclic): step 1/1. It functions in the pathway amino-acid biosynthesis; L-arginine biosynthesis; N(2)-acetyl-L-ornithine from L-glutamate: step 1/4. In terms of biological role, catalyzes two activities which are involved in the cyclic version of arginine biosynthesis: the synthesis of acetylglutamate from glutamate and acetyl-CoA, and of ornithine by transacetylation between acetylornithine and glutamate. The sequence is that of Arginine biosynthesis bifunctional protein ArgJ, mitochondrial from Podospora anserina (strain S / ATCC MYA-4624 / DSM 980 / FGSC 10383) (Pleurage anserina).